Here is a 491-residue protein sequence, read N- to C-terminus: Trigger factor (491 aa).

Positions 173–260 (GDVAVVSFSG…LDELKGRELP (88 aa)) constitute a PPIase FKBP-type domain. Residues 435–491 (MVDPASEDKPAKASKAKSSKAKAEKEPAAEGQAKAKPAAKTSKSKTKAAEKLITPID) form a disordered region. Over residues 463–475 (AEGQAKAKPAAKT) the composition is skewed to low complexity.

This sequence belongs to the FKBP-type PPIase family. Tig subfamily.

Its subcellular location is the cytoplasm. It carries out the reaction [protein]-peptidylproline (omega=180) = [protein]-peptidylproline (omega=0). Functionally, involved in protein export. Acts as a chaperone by maintaining the newly synthesized protein in an open conformation. Functions as a peptidyl-prolyl cis-trans isomerase. In Synechococcus sp. (strain RCC307), this protein is Trigger factor.